A 266-amino-acid chain; its full sequence is Hydroxyethylthiazole kinase (266 aa).

Met43 provides a ligand contact to substrate. The ATP site is built by Arg119 and Thr166. Gly193 provides a ligand contact to substrate.

Belongs to the Thz kinase family. Requires Mg(2+) as cofactor.

The enzyme catalyses 5-(2-hydroxyethyl)-4-methylthiazole + ATP = 4-methyl-5-(2-phosphooxyethyl)-thiazole + ADP + H(+). Its pathway is cofactor biosynthesis; thiamine diphosphate biosynthesis; 4-methyl-5-(2-phosphoethyl)-thiazole from 5-(2-hydroxyethyl)-4-methylthiazole: step 1/1. Catalyzes the phosphorylation of the hydroxyl group of 4-methyl-5-beta-hydroxyethylthiazole (THZ). This is Hydroxyethylthiazole kinase from Methanococcus maripaludis (strain C7 / ATCC BAA-1331).